The primary structure comprises 1157 residues: MHASSAAATALVEYSDVSSEDFSDQEAGDLDADAGKGAGNIKKPKPAPDNQFSKGRLDAKPDKEGYDNYRSRRAEDSSDPVAAGSRQTSSSEATNPREEPSQASNTSKDELWGREIYMSSDSIDTDELEAEMKRQKRKKQKKEKHKHKSKKKSKKRKKKRAKSYSSIDSMSDNDINALLDRRYTPPTAPSKSNERTVSAAPSSFTPHNLKESSSPATPPPVRRPNTNSNYYGESSLETANSALGSNLQVTVTNKQSISNRLRSPPPSSRSSGNGPRFGNSPRTPPPSHYSSSGGGGVGSGSVVRDSRSSRYVNSPHKEDVSAHHRSSHDHGYQGRYSGAGSSSHDTRKVKRLSPELDRYNHQPSTPPHKRRKFSDGREVGLGNFEHSRHHSGKYERYSRDRYSRRSSRSPSVQHSRSRQSPSGGLSSGSNAFRHGGSHKHKYGTTVSSTPSHTTRTSKRASGTGTSGDRYSRSPRTSSRYMESSPPSPVGASGSHHYHHRRSPRMRQRTRGDSRRRSPSSASSESSASRSRSPTSRDLKHKREEYIKKISETSLFAELVKDRHKRQKALKEIIERQEENSNSNSNGALTINDNSSSVDGNTPNAADGRSAPGSGTPAAASTTSNGLQALGSKPDLDLNNIPMPNKQNDSVVSNPASNADVPDSVAQLKQPLLVPPFSASKNNIKPKSLTSLPLPPGMNVLDLAGARSPSPGQKKESDEKNVTSSGSANKSVLNLPMPPVIPGSEELSGDDDVIDSPEDFDAPAVGTVHGHGGGPGTTRQRPVILNRRDSRNNVRDWGERCVDVFEMIAQIGEGTYGQVYKARDHHTNDMVALKKVRLEHEKEGFPITAVREIKILRQLNHRNIVNLHEIVTDKQDAVEFRKDKGSFYLVFEYMDHDLMGLLESGMVDFNEENNASIMKQLLDGLNYCHKKNFLHRDIKCSNILMNNRGKVKLADFGLARLYNADDRERPYTNKVITLWYRPPELLLGEERYGPSIDVWSCGCILGELFVKRPLFQANAEMAQLETISKICGSPVPAVWPNVIKLPLFHTLKQKKTHRRRLREDFEFMPAPALDLLDKMLDLDPDKRITAEDALRSPWLRKINPDEMPTPQLPTWQDCHELWSKKRRRQMREQQESLPPTVIASTKYQQHGATMVGDA.

A disordered region spans residues 15–540; it reads SDVSSEDFSD…RSPTSRDLKH (526 aa). A compositionally biased stretch (acidic residues) spans 18–32; sequence SSEDFSDQEAGDLDA. Positions 55–76 are enriched in basic and acidic residues; the sequence is GRLDAKPDKEGYDNYRSRRAED. The span at 85–94 shows a compositional bias: polar residues; it reads SRQTSSSEAT. At threonine 106 the chain carries Phosphothreonine. Residues 134-162 show a composition bias toward basic residues; it reads RQKRKKQKKEKHKHKSKKKSKKRKKKRAK. A compositionally biased stretch (low complexity) spans 163–176; that stretch reads SYSSIDSMSDNDIN. Threonine 184 bears the Phosphothreonine mark. Polar residues predominate over residues 189–215; that stretch reads PSKSNERTVSAAPSSFTPHNLKESSSP. 2 positions are modified to phosphoserine: serine 190 and serine 192. Threonine 217 bears the Phosphothreonine mark. Residues 224–255 are compositionally biased toward polar residues; sequence PNTNSNYYGESSLETANSALGSNLQVTVTNKQ. Residues 256 to 281 are compositionally biased toward low complexity; it reads SISNRLRSPPPSSRSSGNGPRFGNSP. A Phosphoserine modification is found at serine 280. Threonine 283 carries the post-translational modification Phosphothreonine. A phosphoserine mark is found at serine 291, serine 301, and serine 314. Residues 315–332 are compositionally biased toward basic and acidic residues; it reads PHKEDVSAHHRSSHDHGY. Serine 353 bears the Phosphoserine mark. Threonine 365 is subject to Phosphothreonine. A compositionally biased stretch (basic and acidic residues) spans 392 to 403; sequence GKYERYSRDRYS. Low complexity predominate over residues 408–422; sequence RSPSVQHSRSRQSPS. A compositionally biased stretch (polar residues) spans 444-468; it reads TTVSSTPSHTTRTSKRASGTGTSGD. The segment covering 473–484 has biased composition (low complexity); the sequence is SPRTSSRYMESS. 2 positions are modified to phosphoserine: serine 487 and serine 492. The span at 495 to 508 shows a compositional bias: basic residues; the sequence is HHYHHRRSPRMRQR. Low complexity predominate over residues 518 to 533; that stretch reads PSSASSESSASRSRSP. Serine 553 is modified (phosphoserine). Disordered stretches follow at residues 574-661 and 675-782; these read ERQE…ADVP and PFSA…QRPV. A compositionally biased stretch (polar residues) spans 586 to 603; that stretch reads GALTINDNSSSVDGNTPN. The segment covering 609–623 has biased composition (low complexity); that stretch reads SAPGSGTPAAASTTS. 2 stretches are compositionally biased toward polar residues: residues 644–656 and 721–731; these read NKQNDSVVSNPAS and VTSSGSANKSV. Phosphoserine occurs at positions 730, 743, 747, and 755. Residues 746–760 are compositionally biased toward acidic residues; sequence LSGDDDVIDSPEDFD. In terms of domain architecture, Protein kinase spans 804–1098; sequence FEMIAQIGEG…AEDALRSPWL (295 aa). ATP is bound by residues 810–818, lysine 833, and 891–896; these read IGEGTYGQV and EYMDHD. Aspartate 936 acts as the Proton acceptor in catalysis. Histidine 1118 contributes to the ATP binding site.

The protein belongs to the protein kinase superfamily. CMGC Ser/Thr protein kinase family. CDC2/CDKX subfamily. In terms of assembly, interacts with cyclin CycK.

The protein resides in the nucleus. It is found in the chromosome. It carries out the reaction [DNA-directed RNA polymerase] + ATP = phospho-[DNA-directed RNA polymerase] + ADP + H(+). It catalyses the reaction L-seryl-[protein] + ATP = O-phospho-L-seryl-[protein] + ADP + H(+). The catalysed reaction is L-threonyl-[protein] + ATP = O-phospho-L-threonyl-[protein] + ADP + H(+). In terms of biological role, cyclin-dependent kinase which displays CTD kinase activity: hyperphosphorylates the C-terminal heptapeptide repeat domain (CTD) of the largest RNA polymerase II subunit, thereby acting as a key regulator of transcription elongation. This chain is Cyclin-dependent kinase 12 (Cdk12), found in Drosophila melanogaster (Fruit fly).